Consider the following 565-residue polypeptide: Adenine deaminase 1 (565 aa).

Belongs to the metallo-dependent hydrolases superfamily. Adenine deaminase family. It depends on Mn(2+) as a cofactor.

It catalyses the reaction adenine + H2O + H(+) = hypoxanthine + NH4(+). The chain is Adenine deaminase 1 from Rhizobium meliloti (strain 1021) (Ensifer meliloti).